The sequence spans 156 residues: Zinc finger SWIM domain-containing protein 7 homolog (156 aa).

An SWIM-type zinc finger spans residues Tyr82 to Ile120.

The protein belongs to the SWS1 family.

It localises to the nucleus. Its function is as follows. May be involved in the homologous recombination repair (HRR) pathway of double-stranded DNA breaks arising during DNA replication or induced by DNA-damaging agents. The chain is Zinc finger SWIM domain-containing protein 7 homolog (zswim7) from Dictyostelium discoideum (Social amoeba).